A 1401-amino-acid polypeptide reads, in one-letter code: DNA-directed RNA polymerase subunit beta'' (1401 aa).

Zn(2+) is bound by residues C224, C294, C301, and C304.

It belongs to the RNA polymerase beta' chain family. RpoC2 subfamily. In terms of assembly, in plastids the minimal PEP RNA polymerase catalytic core is composed of four subunits: alpha, beta, beta', and beta''. When a (nuclear-encoded) sigma factor is associated with the core the holoenzyme is formed, which can initiate transcription. Requires Zn(2+) as cofactor.

It is found in the plastid. The protein localises to the chloroplast. It catalyses the reaction RNA(n) + a ribonucleoside 5'-triphosphate = RNA(n+1) + diphosphate. Its function is as follows. DNA-dependent RNA polymerase catalyzes the transcription of DNA into RNA using the four ribonucleoside triphosphates as substrates. This chain is DNA-directed RNA polymerase subunit beta'', found in Nymphaea alba (White water-lily).